Here is a 450-residue protein sequence, read N- to C-terminus: Tubulin beta-6 chain (450 aa).

Positions 11, 71, 140, 144, 145, 146, 206, and 228 each coordinate GTP. Mg(2+) is bound at residue Glu71. The tract at residues 429–450 (DATVEDEEEYEGEEGLDENYET) is disordered. Acidic residues predominate over residues 431-450 (TVEDEEEYEGEEGLDENYET).

It belongs to the tubulin family. Dimer of alpha and beta chains. A typical microtubule is a hollow water-filled tube with an outer diameter of 25 nm and an inner diameter of 15 nM. Alpha-beta heterodimers associate head-to-tail to form protofilaments running lengthwise along the microtubule wall with the beta-tubulin subunit facing the microtubule plus end conferring a structural polarity. Microtubules usually have 13 protofilaments but different protofilament numbers can be found in some organisms and specialized cells. Requires Mg(2+) as cofactor.

Its subcellular location is the cytoplasm. It localises to the cytoskeleton. Functionally, tubulin is the major constituent of microtubules, a cylinder consisting of laterally associated linear protofilaments composed of alpha- and beta-tubulin heterodimers. Microtubules grow by the addition of GTP-tubulin dimers to the microtubule end, where a stabilizing cap forms. Below the cap, tubulin dimers are in GDP-bound state, owing to GTPase activity of alpha-tubulin. The protein is Tubulin beta-6 chain of Gossypium hirsutum (Upland cotton).